A 726-amino-acid chain; its full sequence is Bromodomain-containing protein 3 (726 aa).

The interval M1–K35 is disordered. N-acetylserine is present on S2. Residues T15–V26 are compositionally biased toward pro residues. The Bromo 1 domain occupies R34–M140. Residues K78–P80 are acetylated histone H3 binding. Disordered regions lie at residues P149–Q169 and V237–K305. The segment covering T248 to S261 has biased composition (low complexity). Residues S263 and S281 each carry the phosphoserine modification. The Bromo 2 domain occupies G306–M415. A Glycyl lysine isopeptide (Lys-Gly) (interchain with G-Cter in SUMO2) cross-link involves residue K414. 3 disordered regions span residues E421–R462, L477–D575, and L637–E726. The stretch at S453 to A524 forms a coiled coil. Over residues K487–D503 the composition is skewed to basic residues. The span at K504–A521 shows a compositional bias: basic and acidic residues. Over residues V523–A540 the composition is skewed to low complexity. The NET domain maps to D562 to P644. Phosphoserine is present on S563. Positions F645–K684 form a coiled coil. The segment covering K655–Q673 has biased composition (basic and acidic residues). A compositionally biased stretch (low complexity) spans G692–E726.

It belongs to the BET family. Interacts (via bromo domain 1) with GATA1 acetylated at 'Lys-312' and 'Lys-315'. Interacts (via bromo domain 1) with GATA2 acetylated on lysine residues. Interacts (via NET domain) with CHD4 (via KIKL motif). Interacts (via NET domain) with SMARCA4 (via KIKL motif). Interacts (via NET domain) with NSD3 (via KIKL motif). In terms of assembly, (Microbial infection) Interacts with the Integrase protein of Moloney murine leukemia virus (MLV). In terms of tissue distribution, ubiquitous.

It localises to the nucleus. Its subcellular location is the chromosome. Inhibited by JQ1, a thieno-triazolo-1,4-diazepine derivative, which specifically inhibits members of the BET family (BRD2, BRD3 and BRD4). The first bromo domain is inhibited by GSK778 (iBET-BD1), which specifically inhibits the first bromo domain of members of the BET family (BRD2, BRD3 and BRD4). The second bromo domain is inhibited by ABBV-744, which specifically inhibits the second bromo domain of members of the BET family (BRD2, BRD3 and BRD4). The second bromo domain is inhibited by GSK046 (iBET-BD2), which specifically inhibits the second bromo domain of members of the BET family (BRD2, BRD3 and BRD4). Functionally, chromatin reader that recognizes and binds acetylated histones, thereby controlling gene expression and remodeling chromatin structures. Recruits transcription factors and coactivators to target gene sites, and activates RNA polymerase II machinery for transcriptional elongation. In vitro, binds acetylated lysine residues on the N-terminus of histone H2A, H2B, H3 and H4. Involved in endoderm differentiation via its association with long non-coding RNA (lncRNA) DIGIT: BRD3 undergoes liquid-liquid phase separation upon binding to lncRNA DIGIT, promoting binding to histone H3 acetylated at 'Lys-18' (H3K18ac) to induce endoderm gene expression. Also binds non-histones acetylated proteins, such as GATA1 and GATA2: regulates transcription by promoting the binding of the transcription factor GATA1 to its targets. The polypeptide is Bromodomain-containing protein 3 (Homo sapiens (Human)).